Here is a 191-residue protein sequence, read N- to C-terminus: UPF0312 protein Sputcn32_2702 (191 aa).

An N-terminal signal peptide occupies residues 1–22 (MKKQLLSALIGVSLLAPMAASA).

The protein belongs to the UPF0312 family. Type 1 subfamily.

The protein resides in the periplasm. In Shewanella putrefaciens (strain CN-32 / ATCC BAA-453), this protein is UPF0312 protein Sputcn32_2702.